The sequence spans 864 residues: Mitochondrial 15S rRNA processing factor CCM1 (864 aa).

The N-terminal 76 residues, 1–76 (MYMARCGPKN…REFSNTLKER (76 aa)), are a transit peptide targeting the mitochondrion. 2 stretches are compositionally biased toward polar residues: residues 80 to 94 (TKSV…NSIA) and 102 to 112 (NVNVTKTSSVP). Positions 80 to 117 (TKSVNSDGHQSNSIAPISEDSRNVNVTKTSSVPNEEKS) are disordered. PPR repeat units follow at residues 319–353 (NKQN…STKH) and 356–390 (DICT…NIKP).

It belongs to the CCM1 family. Binds to mitochondrial small subunit 15S rRNA.

It localises to the mitochondrion. Its function is as follows. Regulates mitochondrial small subunit maturation by controlling 15S rRNA 5'-end processing. Localizes to the 5' precursor of the 15S rRNA in a position that is subsequently occupied by mS47 in the mature yeast mtSSU. Uses structure and sequence-specific RNA recognition, binding to a single-stranded region of the precursor and specifically recognizing bases -6 to -1. The exchange of Ccm1 for mS47 is coupled to the irreversible removal of precursor rRNA that is accompanied by conformational changes of the mitoribosomal proteins uS5m and mS26. These conformational changes signal completion of 5'-end rRNA processing through protection of the mature 5'-end of the 15S rRNA and stabilization of mS47. The removal of the 5' precursor together with the dissociation of Ccm1 may be catalyzed by the 5'-3' exoribonuclease Pet127. Involved in the specific removal of group I introns in mitochondrial encoded transcripts. This Saccharomyces cerevisiae (strain ATCC 204508 / S288c) (Baker's yeast) protein is Mitochondrial 15S rRNA processing factor CCM1.